We begin with the raw amino-acid sequence, 429 residues long: Glutamate-1-semialdehyde 2,1-aminomutase 2 (429 aa).

Position 268 is an N6-(pyridoxal phosphate)lysine (Lys-268).

Belongs to the class-III pyridoxal-phosphate-dependent aminotransferase family. HemL subfamily. As to quaternary structure, homodimer. Pyridoxal 5'-phosphate is required as a cofactor.

The protein resides in the cytoplasm. It carries out the reaction (S)-4-amino-5-oxopentanoate = 5-aminolevulinate. Its pathway is porphyrin-containing compound metabolism; protoporphyrin-IX biosynthesis; 5-aminolevulinate from L-glutamyl-tRNA(Glu): step 2/2. This chain is Glutamate-1-semialdehyde 2,1-aminomutase 2, found in Geobacillus kaustophilus (strain HTA426).